The chain runs to 140 residues: Large ribosomal subunit protein bL17 (140 aa).

The protein belongs to the bacterial ribosomal protein bL17 family. In terms of assembly, part of the 50S ribosomal subunit. Contacts protein L32.

The sequence is that of Large ribosomal subunit protein bL17 from Paramagnetospirillum magneticum (strain ATCC 700264 / AMB-1) (Magnetospirillum magneticum).